A 346-amino-acid chain; its full sequence is Biotin synthase (346 aa).

The Radical SAM core domain occupies 38-256; sequence QQVQVSTLLS…IAVARIMMPT (219 aa). The [4Fe-4S] cluster site is built by C53, C57, and C60. [2Fe-2S] cluster-binding residues include C97, C128, C188, and R260.

The protein belongs to the radical SAM superfamily. Biotin synthase family. As to quaternary structure, homodimer. [4Fe-4S] cluster is required as a cofactor. The cofactor is [2Fe-2S] cluster.

It catalyses the reaction (4R,5S)-dethiobiotin + (sulfur carrier)-SH + 2 reduced [2Fe-2S]-[ferredoxin] + 2 S-adenosyl-L-methionine = (sulfur carrier)-H + biotin + 2 5'-deoxyadenosine + 2 L-methionine + 2 oxidized [2Fe-2S]-[ferredoxin]. It participates in cofactor biosynthesis; biotin biosynthesis; biotin from 7,8-diaminononanoate: step 2/2. Functionally, catalyzes the conversion of dethiobiotin (DTB) to biotin by the insertion of a sulfur atom into dethiobiotin via a radical-based mechanism. This chain is Biotin synthase, found in Salmonella gallinarum (strain 287/91 / NCTC 13346).